A 364-amino-acid polypeptide reads, in one-letter code: Putative glutamate--cysteine ligase 2-2 (364 aa).

It belongs to the glutamate--cysteine ligase type 2 family. YbdK subfamily.

It carries out the reaction L-cysteine + L-glutamate + ATP = gamma-L-glutamyl-L-cysteine + ADP + phosphate + H(+). Functionally, ATP-dependent carboxylate-amine ligase which exhibits weak glutamate--cysteine ligase activity. The protein is Putative glutamate--cysteine ligase 2-2 of Mycobacterium sp. (strain JLS).